A 261-amino-acid chain; its full sequence is tRNA pseudouridine synthase A (261 aa).

Aspartate 55 acts as the Nucleophile in catalysis. Tyrosine 114 contacts substrate.

The protein belongs to the tRNA pseudouridine synthase TruA family. Homodimer.

It catalyses the reaction uridine(38/39/40) in tRNA = pseudouridine(38/39/40) in tRNA. Formation of pseudouridine at positions 38, 39 and 40 in the anticodon stem and loop of transfer RNAs. The protein is tRNA pseudouridine synthase A of Paracoccus denitrificans (strain Pd 1222).